A 411-amino-acid polypeptide reads, in one-letter code: Imidazolonepropionase (411 aa).

Positions 78 and 80 each coordinate Fe(3+). Residues H78 and H80 each coordinate Zn(2+). The 4-imidazolone-5-propanoate site is built by R87, Y150, and H183. Position 150 (Y150) interacts with N-formimidoyl-L-glutamate. A Fe(3+)-binding site is contributed by H248. H248 serves as a coordination point for Zn(2+). Q251 contacts 4-imidazolone-5-propanoate. Position 322 (D322) interacts with Fe(3+). Residue D322 coordinates Zn(2+). Residues N324 and G326 each contribute to the N-formimidoyl-L-glutamate site. A 4-imidazolone-5-propanoate-binding site is contributed by S327.

Belongs to the metallo-dependent hydrolases superfamily. HutI family. Zn(2+) is required as a cofactor. It depends on Fe(3+) as a cofactor.

It localises to the cytoplasm. It carries out the reaction 4-imidazolone-5-propanoate + H2O = N-formimidoyl-L-glutamate. The protein operates within amino-acid degradation; L-histidine degradation into L-glutamate; N-formimidoyl-L-glutamate from L-histidine: step 3/3. Catalyzes the hydrolytic cleavage of the carbon-nitrogen bond in imidazolone-5-propanoate to yield N-formimidoyl-L-glutamate. It is the third step in the universal histidine degradation pathway. This Christiangramia forsetii (strain DSM 17595 / CGMCC 1.15422 / KT0803) (Gramella forsetii) protein is Imidazolonepropionase.